The sequence spans 389 residues: Krueppel-like factor 17 (389 aa).

2 disordered regions span residues 1–48 (MYGR…SGVH) and 239–279 (LVSQ…GSSE). Polar residues predominate over residues 26–38 (AQDNENSAPILNM). The span at 264 to 278 (KNSRPQEGTGRRGSS) shows a compositional bias: basic and acidic residues. 3 C2H2-type zinc fingers span residues 283 to 307 (YCCN…QRKH), 313 to 337 (YSCN…MRVH), and 343 to 365 (YKCD…QKTH). A disordered region spans residues 356–389 (DHLKQHQKTHRPGPSDPQANNNNGEQDSPPAAGP). Residues 372 to 381 (PQANNNNGEQ) are compositionally biased toward polar residues.

The protein belongs to the Sp1 C2H2-type zinc-finger protein family.

The protein resides in the nucleus. In terms of biological role, transcription repressor that binds to the promoter of target genes and prevents their expression. Acts as a negative regulator of epithelial-mesenchymal transition and metastasis in breast cancer. Specifically binds the 5'-CACCC-3' sequence in the promoter of ID1, a key metastasis regulator in breast cancer, and repress its expression. May be a germ cell-specific transcription factor that plays important roles in spermatid differentiation and oocyte development. The sequence is that of Krueppel-like factor 17 (KLF17) from Homo sapiens (Human).